The following is a 432-amino-acid chain: Glutamate-1-semialdehyde 2,1-aminomutase 1 (432 aa).

At lysine 268 the chain carries N6-(pyridoxal phosphate)lysine.

This sequence belongs to the class-III pyridoxal-phosphate-dependent aminotransferase family. HemL subfamily. Homodimer. Requires pyridoxal 5'-phosphate as cofactor.

It is found in the cytoplasm. It catalyses the reaction (S)-4-amino-5-oxopentanoate = 5-aminolevulinate. It participates in porphyrin-containing compound metabolism; protoporphyrin-IX biosynthesis; 5-aminolevulinate from L-glutamyl-tRNA(Glu): step 2/2. The polypeptide is Glutamate-1-semialdehyde 2,1-aminomutase 1 (Bacillus mycoides (strain KBAB4) (Bacillus weihenstephanensis)).